We begin with the raw amino-acid sequence, 520 residues long: Alkyl hydroperoxide reductase subunit F (520 aa).

213 to 228 serves as a coordination point for FAD; the sequence is DVLVVGGGPAGAAAAI. C343 and C346 form a disulfide bridge. 355–369 serves as a coordination point for NAD(+); that stretch reads RVAVIGGGNSGVEAA. 476–486 is an FAD binding site; sequence TSIPGVFAAGD.

This sequence belongs to the class-II pyridine nucleotide-disulfide oxidoreductase family. As to quaternary structure, homodimer. Requires FAD as cofactor.

In terms of biological role, serves to protect the cell against DNA damage by alkyl hydroperoxides. It can use either NADH or NADPH as electron donor for direct reduction of redox dyes or of alkyl hydroperoxides when combined with the AhpC protein. In Pseudomonas putida (Arthrobacter siderocapsulatus), this protein is Alkyl hydroperoxide reductase subunit F (ahpF).